The primary structure comprises 124 residues: Large ribosomal subunit protein bL20 (124 aa).

The protein belongs to the bacterial ribosomal protein bL20 family.

Binds directly to 23S ribosomal RNA and is necessary for the in vitro assembly process of the 50S ribosomal subunit. It is not involved in the protein synthesizing functions of that subunit. The chain is Large ribosomal subunit protein bL20 (rplT) from Mycoplasma genitalium (strain ATCC 33530 / DSM 19775 / NCTC 10195 / G37) (Mycoplasmoides genitalium).